A 513-amino-acid chain; its full sequence is ATP synthase subunit alpha (513 aa).

Residue 169-176 (GDRQTGKT) participates in ATP binding.

This sequence belongs to the ATPase alpha/beta chains family. As to quaternary structure, F-type ATPases have 2 components, CF(1) - the catalytic core - and CF(0) - the membrane proton channel. CF(1) has five subunits: alpha(3), beta(3), gamma(1), delta(1), epsilon(1). CF(0) has three main subunits: a(1), b(2) and c(9-12). The alpha and beta chains form an alternating ring which encloses part of the gamma chain. CF(1) is attached to CF(0) by a central stalk formed by the gamma and epsilon chains, while a peripheral stalk is formed by the delta and b chains.

It is found in the cell inner membrane. The enzyme catalyses ATP + H2O + 4 H(+)(in) = ADP + phosphate + 5 H(+)(out). Its function is as follows. Produces ATP from ADP in the presence of a proton gradient across the membrane. The alpha chain is a regulatory subunit. The sequence is that of ATP synthase subunit alpha from Shigella boydii serotype 18 (strain CDC 3083-94 / BS512).